We begin with the raw amino-acid sequence, 613 residues long: tRNA 5-methylaminomethyl-2-thiouridine biosynthesis bifunctional protein MnmC (613 aa).

The segment at 1-225 is tRNA (mnm(5)s(2)U34)-methyltransferase; it reads MKKAKLIFKD…KREMIKAYLE (225 aa). The interval 252 to 613 is FAD-dependent cmnm(5)s(2)U34 oxidoreductase; sequence IGAGISSAVL…FLIRKLKKGL (362 aa).

In the N-terminal section; belongs to the methyltransferase superfamily. tRNA (mnm(5)s(2)U34)-methyltransferase family. The protein in the C-terminal section; belongs to the DAO family. FAD is required as a cofactor.

It localises to the cytoplasm. The catalysed reaction is 5-aminomethyl-2-thiouridine(34) in tRNA + S-adenosyl-L-methionine = 5-methylaminomethyl-2-thiouridine(34) in tRNA + S-adenosyl-L-homocysteine + H(+). Catalyzes the last two steps in the biosynthesis of 5-methylaminomethyl-2-thiouridine (mnm(5)s(2)U) at the wobble position (U34) in tRNA. Catalyzes the FAD-dependent demodification of cmnm(5)s(2)U34 to nm(5)s(2)U34, followed by the transfer of a methyl group from S-adenosyl-L-methionine to nm(5)s(2)U34, to form mnm(5)s(2)U34. This is tRNA 5-methylaminomethyl-2-thiouridine biosynthesis bifunctional protein MnmC from Campylobacter jejuni subsp. jejuni serotype O:2 (strain ATCC 700819 / NCTC 11168).